A 208-amino-acid chain; its full sequence is Coat protein (208 aa).

The protein belongs to the potexvirus capsid protein family.

It localises to the virion. Its function is as follows. Required for genome encapsidation. Forms ribonucleoprotein complexes along with TGB1 helicase and viral RNA. The chain is Coat protein from Trifolium (WCMV).